We begin with the raw amino-acid sequence, 93 residues long: Bublin coiled-coil protein (93 aa).

Disordered stretches follow at residues 1–26 and 74–93; these read MAGP…GDTF and QQQS…QPPA. Over residues 17–26 the composition is skewed to acidic residues; that stretch reads DEGDEGGDTF. A coiled-coil region spans residues 59-80; that stretch reads LKELLESNRQTRLEFQQQSKQL.

The protein belongs to the UPF0184 (EST00098) family.

Its subcellular location is the cell junction. The protein localises to the cytoplasm. It localises to the cytoskeleton. Functionally, essential for intermediate filament organization in intestinal cells, interacts with intermediate filament and regulates intestinal lumen morphology. This chain is Bublin coiled-coil protein (BBLN), found in Taeniopygia guttata (Zebra finch).